The sequence spans 715 residues: Palmitoyltransferase ZDHHC5 (715 aa).

Residues methionine 1–lysine 13 are Cytoplasmic-facing. The chain crosses the membrane as a helical span at residues tyrosine 14–phenylalanine 34. The Extracellular portion of the chain corresponds to threonine 35–glycine 38. A helical membrane pass occupies residues leucine 39–leucine 59. Residues alanine 60 to tyrosine 148 are Cytoplasmic-facing. Tyrosine 91 bears the Phosphotyrosine mark. The region spanning lysine 104 to leucine 154 is the DHHC domain. Cysteine 134 (S-palmitoyl cysteine intermediate) is an active-site residue. Residues phenylalanine 149–leucine 169 form a helical membrane-spanning segment. Residues tyrosine 170–cysteine 191 are Extracellular-facing. A helical membrane pass occupies residues valine 192–alanine 212. The Cytoplasmic segment spans residues arginine 213–valine 715. Serine 247 bears the Phosphoserine mark. The disordered stretch occupies residues glycine 289–valine 715. Phosphothreonine is present on threonine 294. Residues serine 296 and serine 299 each carry the phosphoserine modification. Position 303 is a phosphothreonine (threonine 303). Serine 345 carries the phosphoserine modification. 2 positions are modified to phosphothreonine: threonine 348 and threonine 350. Positions serine 359–alanine 373 are enriched in low complexity. A phosphoserine mark is found at serine 380, serine 398, serine 406, and serine 409. The residue at position 411 (threonine 411) is a Phosphothreonine. Serine 415, serine 425, serine 429, and serine 432 each carry phosphoserine. A compositionally biased stretch (low complexity) spans serine 422–serine 432. Threonine 436 is modified (phosphothreonine). Over residues glutamine 442–aspartate 478 the composition is skewed to polar residues. A phosphoserine mark is found at serine 529 and serine 554. At arginine 617 the chain carries Omega-N-methylarginine. Position 621 is a phosphoserine (serine 621). Residue threonine 659 is modified to Phosphothreonine. The span at leucine 666–proline 677 shows a compositional bias: polar residues. Serine 684 and serine 694 each carry phosphoserine. Arginine 697 is subject to Omega-N-methylarginine.

This sequence belongs to the DHHC palmitoyltransferase family. ERF2/ZDHHC9 subfamily.

It localises to the cell membrane. It carries out the reaction L-cysteinyl-[protein] + hexadecanoyl-CoA = S-hexadecanoyl-L-cysteinyl-[protein] + CoA. Palmitoyltransferase that catalyzes the addition of palmitate onto various protein substrates such as CTNND2, CD36, GSDMD, NLRP3, NOD1, NOD2, STAT3 and S1PR1 thus plays a role in various biological processes including cell adhesion, inflammation, fatty acid uptake, bacterial sensing or cardiac functions. Plays an important role in the regulation of synapse efficacy by mediating palmitoylation of delta-catenin/CTNND2, thereby increasing synaptic delivery and surface stabilization of alpha-amino-3-hydroxy-5-methyl-4-isoxazole propionic acid receptors (AMPARs). Under basal conditions, remains at the synaptic membrane through FYN-mediated phosphorylation that prevents association with endocytic proteins. Neuronal activity enhances the internalization and trafficking of DHHC5 from spines to dendritic shafts where it palmitoylates delta-catenin/CTNND2. Regulates cell adhesion at the plasma membrane by palmitoylating GOLGA7B and DSG2. Plays a role in innate immune response by mediating the palmitoylation of NOD1 and NOD2 and their proper recruitment to the bacterial entry site and phagosomes. Also participates in fatty acid uptake by palmitoylating CD36 and thereby targeting it to the plasma membrane. Upon binding of fatty acids to CD36, gets phosphorylated by LYN leading to inactivation and subsequent CD36 caveolar endocytosis. Controls oligodendrocyte development by catalyzing STAT3 palmitoylation. Acts as a regulator of inflammatory response by mediating palmitoylation of NLRP3 and GSDMD. Palmitoylates NLRP3 to promote inflammasome assembly and activation. Activates pyroptosis by catalyzing palmitoylation of gasdermin-D (GSDMD), thereby promoting membrane translocation and pore formation of GSDMD. The sequence is that of Palmitoyltransferase ZDHHC5 (ZDHHC5) from Pan troglodytes (Chimpanzee).